Here is a 1001-residue protein sequence, read N- to C-terminus: Serine/threonine-protein kinase TAO1-B (1001 aa).

The 254-residue stretch at 28 to 281 (FSDLREIGHG…SDELLKHMFV (254 aa)) folds into the Protein kinase domain. ATP is bound by residues 34 to 42 (IGHGSFGAV) and Lys-57. Residue Asp-151 is the Proton acceptor of the active site. 2 disordered regions span residues 324–435 (PAVE…YRNR) and 567–586 (KEELNENQSTPKKEKQEWLS). A compositionally biased stretch (low complexity) spans 350–370 (SNQSIPSMSISASSQSSSVNS). Composition is skewed to basic and acidic residues over residues 375–388 (SDDKSELDMMEGDH) and 577–586 (PKKEKQEWLS). 2 coiled-coil regions span residues 458-651 (SELR…EHAM) and 754-877 (KAVL…EIEA). Residues 911-1001 (SHNPTGGPGP…ISNGSHMSYT (91 aa)) are disordered. The span at 921–930 (HWGHPMAGPP) shows a compositional bias: low complexity. Polar residues-rich tracts occupy residues 949-967 (GSVQGVSRGSTMGVRNSPQ) and 975-1001 (GGRTEQGMSRSTSVTSQISNGSHMSYT).

Belongs to the protein kinase superfamily. STE Ser/Thr protein kinase family. STE20 subfamily.

It is found in the cytoplasm. It carries out the reaction L-seryl-[protein] + ATP = O-phospho-L-seryl-[protein] + ADP + H(+). It catalyses the reaction L-threonyl-[protein] + ATP = O-phospho-L-threonyl-[protein] + ADP + H(+). In terms of biological role, serine/threonine-protein kinase involved in various processes such as p38/mapk14 stress-activated MAPK cascade, DNA damage response and regulation of cytoskeleton stability. Acts as an activator of the p38/MAPK14 stress-activated MAPK cascade by mediating phosphorylation and subsequent activation of upstream MAP kinase kinases. In response to DNA damage, involved in the G2/M transition DNA damage checkpoint by activating the p38/MAPK14 stress-activated MAPK cascade. This is Serine/threonine-protein kinase TAO1-B (taok1-b) from Xenopus laevis (African clawed frog).